A 919-amino-acid chain; its full sequence is Probable dipeptidyl-aminopeptidase B (919 aa).

Residues 1–10 (MRPSDDHGET) show a composition bias toward basic and acidic residues. The disordered stretch occupies residues 1 to 50 (MRPSDDHGETSEFLPITRSRSVSAASQTSTDSSLSTESLFPGEQKPFPNV). The Cytoplasmic segment spans residues 1–92 (MRPSDDHGET…AATGGGRARR (92 aa)). Positions 21–38 (SVSAASQTSTDSSLSTES) are enriched in low complexity. A helical; Signal-anchor for type II membrane protein transmembrane segment spans residues 93–113 (IFWILVLLCLGGWLLAFALFL). Topologically, residues 114-919 (TGGRANYQTA…MKRSLPLLYP (806 aa)) are vacuolar. N200, N352, and N643 each carry an N-linked (GlcNAc...) asparagine glycan. S757 (charge relay system) is an active-site residue. The N-linked (GlcNAc...) asparagine glycan is linked to N811. Residues D834 and H867 each act as charge relay system in the active site.

The protein belongs to the peptidase S9B family.

Its subcellular location is the vacuole membrane. It carries out the reaction Release of an N-terminal dipeptide, Xaa-Yaa-|-Zaa-, from a polypeptide, preferentially when Yaa is Pro, provided Zaa is neither Pro nor hydroxyproline.. Its function is as follows. Type IV dipeptidyl-peptidase which removes N-terminal dipeptides sequentially from polypeptides having unsubstituted N-termini provided that the penultimate residue is proline. The sequence is that of Probable dipeptidyl-aminopeptidase B (dapB) from Neosartorya fischeri (strain ATCC 1020 / DSM 3700 / CBS 544.65 / FGSC A1164 / JCM 1740 / NRRL 181 / WB 181) (Aspergillus fischerianus).